A 488-amino-acid chain; its full sequence is Probable malate:quinone oxidoreductase (488 aa).

This sequence belongs to the MQO family. The cofactor is FAD.

The enzyme catalyses (S)-malate + a quinone = a quinol + oxaloacetate. Its pathway is carbohydrate metabolism; tricarboxylic acid cycle; oxaloacetate from (S)-malate (quinone route): step 1/1. The chain is Probable malate:quinone oxidoreductase from Neisseria gonorrhoeae (strain ATCC 700825 / FA 1090).